Consider the following 446-residue polypeptide: Maltoporin (446 aa).

Positions 1 to 25 (MMITLRKLPLAVAVAAGVMSAQAMA) are cleaved as a signal peptide.

Belongs to the porin LamB (TC 1.B.3) family. In terms of assembly, homotrimer formed of three 18-stranded antiparallel beta-barrels, containing three independent channels.

Its subcellular location is the cell outer membrane. It catalyses the reaction beta-maltose(in) = beta-maltose(out). Its function is as follows. Involved in the transport of maltose and maltodextrins. The protein is Maltoporin of Escherichia coli O6:K15:H31 (strain 536 / UPEC).